A 243-amino-acid polypeptide reads, in one-letter code: uncharacterized protein (243 aa).

This is an uncharacterized protein from Methanocaldococcus jannaschii (strain ATCC 43067 / DSM 2661 / JAL-1 / JCM 10045 / NBRC 100440) (Methanococcus jannaschii).